Here is a 108-residue protein sequence, read N- to C-terminus: Thiosulfate sulfurtransferase GlpE (108 aa).

The Rhodanese domain occupies 17–105 (RQGAAVLVDI…WHRRFPANVA (89 aa)). Catalysis depends on Cys65, which acts as the Cysteine persulfide intermediate.

This sequence belongs to the GlpE family.

The protein resides in the cytoplasm. The catalysed reaction is thiosulfate + hydrogen cyanide = thiocyanate + sulfite + 2 H(+). It carries out the reaction thiosulfate + [thioredoxin]-dithiol = [thioredoxin]-disulfide + hydrogen sulfide + sulfite + 2 H(+). In terms of biological role, transferase that catalyzes the transfer of sulfur from thiosulfate to thiophilic acceptors such as cyanide or dithiols. May function in a CysM-independent thiosulfate assimilation pathway by catalyzing the conversion of thiosulfate to sulfite, which can then be used for L-cysteine biosynthesis. In Salmonella agona (strain SL483), this protein is Thiosulfate sulfurtransferase GlpE.